Consider the following 288-residue polypeptide: MHSATIGVIGGSGLYAMPDLKNPEEVRLTTPFGDPSDAFIIGELEGRRVAFLPRHGRGHRLNPSEVPARANIYAFKLLGVRALISVSAVGSLREDYAPGHAVIPDQIFDRTKGIRPATFFEGGVVAHVAFDRPFCPYLSNILLHAAQAAGAVVHQGGTLVVMEGPQFSTKAESEENRRRGHSLIGMTALPEAKLAREAEIAYATLAMVTDYDVWHPEHDAVTAEQVIKVLSANVNLSQQIVRHAVAQIDENFTSPAHDALRYAIVTHPDHIPAAVKERLAPIAGRYWS.

Phosphate contacts are provided by residues S12, 54–55 (RH), and 87–88 (SA). M186 serves as a coordination point for substrate. T187 is a phosphate binding site. Substrate is bound at residue 210-212 (DYD).

This sequence belongs to the PNP/MTAP phosphorylase family. MTAP subfamily. As to quaternary structure, homohexamer. Dimer of a homotrimer.

It catalyses the reaction S-methyl-5'-thioadenosine + phosphate = 5-(methylsulfanyl)-alpha-D-ribose 1-phosphate + adenine. The protein operates within amino-acid biosynthesis; L-methionine biosynthesis via salvage pathway; S-methyl-5-thio-alpha-D-ribose 1-phosphate from S-methyl-5'-thioadenosine (phosphorylase route): step 1/1. Catalyzes the reversible phosphorylation of S-methyl-5'-thioadenosine (MTA) to adenine and 5-methylthioribose-1-phosphate. Involved in the breakdown of MTA, a major by-product of polyamine biosynthesis. Responsible for the first step in the methionine salvage pathway after MTA has been generated from S-adenosylmethionine. Has broad substrate specificity with 6-aminopurine nucleosides as preferred substrates. The protein is S-methyl-5'-thioadenosine phosphorylase of Chloroflexus aurantiacus (strain ATCC 29366 / DSM 635 / J-10-fl).